The sequence spans 415 residues: Gamma-glutamyl phosphate reductase (415 aa).

This sequence belongs to the gamma-glutamyl phosphate reductase family.

The protein resides in the cytoplasm. The catalysed reaction is L-glutamate 5-semialdehyde + phosphate + NADP(+) = L-glutamyl 5-phosphate + NADPH + H(+). The protein operates within amino-acid biosynthesis; L-proline biosynthesis; L-glutamate 5-semialdehyde from L-glutamate: step 2/2. Its function is as follows. Catalyzes the NADPH-dependent reduction of L-glutamate 5-phosphate into L-glutamate 5-semialdehyde and phosphate. The product spontaneously undergoes cyclization to form 1-pyrroline-5-carboxylate. This is Gamma-glutamyl phosphate reductase from Ligilactobacillus salivarius (strain UCC118) (Lactobacillus salivarius).